Consider the following 600-residue polypeptide: Pentatricopeptide repeat-containing protein At3g29230 (600 aa).

PPR repeat units lie at residues 50 to 80, 81 to 115, 116 to 150, 151 to 183, 184 to 218, 219 to 245, 246 to 276, 279 to 313, 314 to 348, 349 to 379, 380 to 414, 415 to 445, and 451 to 481; these read DLHI…VQEP, NVHL…GLFA, DNFT…GLSS, DIYV…MSER, DTVS…DLIS, WNTM…MPER, NTVS…MPLP, NVVT…GLKF, DAAA…NLGS, NAYV…IPKK, DLVS…GIRP, DKVT…MEKV, and QVEH…MPME. The type E motif stretch occupies residues 486–561; it reads IWGALLGACR…PSGASSVELE (76 aa). The tract at residues 562 to 592 is type E(+) motif; it reads DGIHEFTVFDKSHPKSDQIYQMLGSLIEPPD.

It belongs to the PPR family. PCMP-E subfamily.

This is Pentatricopeptide repeat-containing protein At3g29230 (PCMP-E27) from Arabidopsis thaliana (Mouse-ear cress).